The following is a 188-amino-acid chain: Probable thymidylate kinase (188 aa).

11–18 (GIDGSGKT) provides a ligand contact to ATP.

Belongs to the thymidylate kinase family.

It carries out the reaction dTMP + ATP = dTDP + ADP. The protein is Probable thymidylate kinase (tmk) of Methanocaldococcus jannaschii (strain ATCC 43067 / DSM 2661 / JAL-1 / JCM 10045 / NBRC 100440) (Methanococcus jannaschii).